A 177-amino-acid polypeptide reads, in one-letter code: Large ribosomal subunit protein uL6 (177 aa).

Belongs to the universal ribosomal protein uL6 family. As to quaternary structure, part of the 50S ribosomal subunit.

Functionally, this protein binds to the 23S rRNA, and is important in its secondary structure. It is located near the subunit interface in the base of the L7/L12 stalk, and near the tRNA binding site of the peptidyltransferase center. The chain is Large ribosomal subunit protein uL6 from Klebsiella pneumoniae (strain 342).